The sequence spans 490 residues: Betaine aldehyde dehydrogenase (490 aa).

3 residues coordinate K(+): threonine 26, isoleucine 27, and aspartate 93. 150–152 (GAW) lines the NAD(+) pocket. Lysine 162 (charge relay system) is an active-site residue. NAD(+) is bound at residue 176-179 (KPSE). Residue valine 180 participates in K(+) binding. 230–233 (GVAS) provides a ligand contact to NAD(+). K(+) is bound at residue leucine 246. The Proton acceptor role is filled by glutamate 252. NAD(+)-binding residues include glycine 254, cysteine 286, and glutamate 387. The active-site Nucleophile is cysteine 286. Cysteine 286 bears the Cysteine sulfenic acid (-SOH) mark. Lysine 457 and glycine 460 together coordinate K(+). Glutamate 464 acts as the Charge relay system in catalysis.

The protein belongs to the aldehyde dehydrogenase family. In terms of assembly, dimer of dimers. The cofactor is K(+).

It carries out the reaction betaine aldehyde + NAD(+) + H2O = glycine betaine + NADH + 2 H(+). It participates in amine and polyamine biosynthesis; betaine biosynthesis via choline pathway; betaine from betaine aldehyde: step 1/1. Functionally, involved in the biosynthesis of the osmoprotectant glycine betaine. Catalyzes the irreversible oxidation of betaine aldehyde to the corresponding acid. The chain is Betaine aldehyde dehydrogenase from Escherichia coli O45:K1 (strain S88 / ExPEC).